A 1249-amino-acid chain; its full sequence is DNA repair protein REV1 (1249 aa).

A BRCT domain is found at 44–131; that stretch reads TASAIFSGVA…RLLSSAPYQL (88 aa). A disordered region spans residues 253–323; the sequence is LSLDSTQEEK…STVQGPSSTK (71 aa). Basic and acidic residues predominate over residues 259–275; it reads QEEKRAEKSNADFRDCT. Polar residues predominate over residues 294-319; that stretch reads RTNSLSPSLHSNTKINGAHHSTVQGP. The tract at residues 350-360 is interaction with target DNA; that stretch reads FYSRSRLHHIS. DCTP contacts are provided by residues R355, 421–425, 508–514, N520, and D568; these read DMDCF and SCSYEAR. One can recognise a UmuC domain in the interval 417-651; that stretch reads VMHVDMDCFF…QLVTNLPGVG (235 aa). D421 is a Mg(2+) binding site. Residues D568 and E569 each coordinate Mg(2+). 2 interaction with target DNA regions span residues 651-654 and 707-715; these read GRSM and RKSVSAEIN. Residues 1035–1047 are compositionally biased toward basic and acidic residues; sequence AYDQRQRQGEDTT. The tract at residues 1035-1109 is disordered; sequence AYDQRQRQGE…LPGAYGSPQK (75 aa). A compositionally biased stretch (polar residues) spans 1048–1057; the sequence is HQQPTSTSVP. A Nuclear localization signal motif is present at residues 1072–1078; it reads KRNKRKN. Positions 1150–1249 are protein interaction domain; mediates interaction with DNA polymerase zeta; it reads FRPAAPNLAG…QTYGSTLKVT (100 aa).

The protein belongs to the DNA polymerase type-Y family. As to quaternary structure, interacts with FAAP20. Monomer. Interacts with the DNA polymerase zeta which is composed of REV3L and MAD2L2; the interaction with MAD2L2 is direct and requires that REV3L is in its closed conformation. Interacts with POLH, POLI and POLK. In terms of tissue distribution, ubiquitous.

It is found in the nucleus. Its function is as follows. Deoxycytidyl transferase involved in DNA repair. Transfers a dCMP residue from dCTP to the 3'-end of a DNA primer in a template-dependent reaction. May assist in the first step in the bypass of abasic lesions by the insertion of a nucleotide opposite the lesion. Required for normal induction of mutations by physical and chemical agents. This is DNA repair protein REV1 (Rev1) from Mus musculus (Mouse).